The sequence spans 238 residues: Ribonuclease PH (238 aa).

Residues arginine 86 and 124-126 (GTR) contribute to the phosphate site.

Belongs to the RNase PH family. As to quaternary structure, homohexameric ring arranged as a trimer of dimers.

The catalysed reaction is tRNA(n+1) + phosphate = tRNA(n) + a ribonucleoside 5'-diphosphate. Phosphorolytic 3'-5' exoribonuclease that plays an important role in tRNA 3'-end maturation. Removes nucleotide residues following the 3'-CCA terminus of tRNAs; can also add nucleotides to the ends of RNA molecules by using nucleoside diphosphates as substrates, but this may not be physiologically important. Probably plays a role in initiation of 16S rRNA degradation (leading to ribosome degradation) during starvation. The sequence is that of Ribonuclease PH from Geobacter sulfurreducens (strain ATCC 51573 / DSM 12127 / PCA).